Reading from the N-terminus, the 412-residue chain is Serine hydroxymethyltransferase (412 aa).

(6S)-5,6,7,8-tetrahydrofolate contacts are provided by residues leucine 117 and 121–123 (GHL). N6-(pyridoxal phosphate)lysine is present on lysine 226. 349 to 351 (SPF) is a binding site for (6S)-5,6,7,8-tetrahydrofolate.

The protein belongs to the SHMT family. In terms of assembly, homodimer. The cofactor is pyridoxal 5'-phosphate.

The protein resides in the cytoplasm. The enzyme catalyses (6R)-5,10-methylene-5,6,7,8-tetrahydrofolate + glycine + H2O = (6S)-5,6,7,8-tetrahydrofolate + L-serine. The protein operates within one-carbon metabolism; tetrahydrofolate interconversion. It functions in the pathway amino-acid biosynthesis; glycine biosynthesis; glycine from L-serine: step 1/1. In terms of biological role, catalyzes the reversible interconversion of serine and glycine with tetrahydrofolate (THF) serving as the one-carbon carrier. This reaction serves as the major source of one-carbon groups required for the biosynthesis of purines, thymidylate, methionine, and other important biomolecules. Also exhibits THF-independent aldolase activity toward beta-hydroxyamino acids, producing glycine and aldehydes, via a retro-aldol mechanism. The chain is Serine hydroxymethyltransferase from Lawsonia intracellularis (strain PHE/MN1-00).